Consider the following 395-residue polypeptide: MIITSLLDTDLYKFTMMQVVLHQFPGAEVEYRFKCRNAGAPGIGKLAPYVNEIREEIRGLCNLRFQDAELAYLKAMRFIKSDFVDFLGIFKLNEKYVSVTALPSGEIEVSIKGPWLHTILFEIPVLAIINEVYFRNTQKQPDLTEGRKRLDTKILELQADGLRELKIADYGTRRRFGKVWHEEVLRTLVTRLGTGMSGQLAGTSNVLFAMKLGLTPLGTMAHEYLQACQALGPRLRDSQVFGFESWAREYRGDLGIALSDVYGMSAFLRDFDMYFCKLFDGARHDSGDPFEWGERMLAHYVKNRVDPRTKTLIFSDALTVPRTIELYQQFRGRCQLAFGIGTNLTNDLGYEPLQIVIKMIRCNGQPVAKLSDTPSKNMCEDEKYLAYLRQVFEIG.

Position 222 is a phosphohistidine; by autocatalysis (histidine 222).

It belongs to the NAPRTase family. In terms of processing, transiently phosphorylated on a His residue during the reaction cycle. Phosphorylation strongly increases the affinity for substrates and increases the rate of nicotinate D-ribonucleotide production. Dephosphorylation regenerates the low-affinity form of the enzyme, leading to product release.

It carries out the reaction nicotinate + 5-phospho-alpha-D-ribose 1-diphosphate + ATP + H2O = nicotinate beta-D-ribonucleotide + ADP + phosphate + diphosphate. The protein operates within cofactor biosynthesis; NAD(+) biosynthesis; nicotinate D-ribonucleotide from nicotinate: step 1/1. Catalyzes the synthesis of beta-nicotinate D-ribonucleotide from nicotinate and 5-phospho-D-ribose 1-phosphate at the expense of ATP. The sequence is that of Nicotinate phosphoribosyltransferase from Polaromonas sp. (strain JS666 / ATCC BAA-500).